Here is a 309-residue protein sequence, read N- to C-terminus: Sulfate adenylyltransferase subunit 2 (309 aa).

The protein belongs to the PAPS reductase family. CysD subfamily. As to quaternary structure, heterodimer composed of CysD, the smaller subunit, and CysN.

It carries out the reaction sulfate + ATP + H(+) = adenosine 5'-phosphosulfate + diphosphate. It functions in the pathway sulfur metabolism; hydrogen sulfide biosynthesis; sulfite from sulfate: step 1/3. With CysN forms the ATP sulfurylase (ATPS) that catalyzes the adenylation of sulfate producing adenosine 5'-phosphosulfate (APS) and diphosphate, the first enzymatic step in sulfur assimilation pathway. APS synthesis involves the formation of a high-energy phosphoric-sulfuric acid anhydride bond driven by GTP hydrolysis by CysN coupled to ATP hydrolysis by CysD. This is Sulfate adenylyltransferase subunit 2 from Methylorubrum extorquens (strain CM4 / NCIMB 13688) (Methylobacterium extorquens).